The sequence spans 443 residues: 5-methylthioadenosine/S-adenosylhomocysteine deaminase (443 aa).

2 residues coordinate Zn(2+): H74 and H76. Substrate is bound by residues E103 and H196. H223 contributes to the Zn(2+) binding site. Residues E226 and D311 each contribute to the substrate site. D311 serves as a coordination point for Zn(2+).

The protein belongs to the metallo-dependent hydrolases superfamily. MTA/SAH deaminase family. Zn(2+) is required as a cofactor.

The catalysed reaction is S-adenosyl-L-homocysteine + H2O + H(+) = S-inosyl-L-homocysteine + NH4(+). The enzyme catalyses S-methyl-5'-thioadenosine + H2O + H(+) = S-methyl-5'-thioinosine + NH4(+). In terms of biological role, catalyzes the deamination of 5-methylthioadenosine and S-adenosyl-L-homocysteine into 5-methylthioinosine and S-inosyl-L-homocysteine, respectively. Is also able to deaminate adenosine. The polypeptide is 5-methylthioadenosine/S-adenosylhomocysteine deaminase (Haloquadratum walsbyi (strain DSM 16790 / HBSQ001)).